We begin with the raw amino-acid sequence, 38 residues long: Large ribosomal subunit protein bL36 (38 aa).

The protein belongs to the bacterial ribosomal protein bL36 family.

The polypeptide is Large ribosomal subunit protein bL36 (Lacticaseibacillus casei (strain BL23) (Lactobacillus casei)).